Consider the following 493-residue polypeptide: Probable plastidic glucose transporter 2 (493 aa).

Positions 1–14 are enriched in polar residues; the sequence is MLGLQRETSSMYKR. The interval 1 to 24 is disordered; sequence MLGLQRETSSMYKRTSSRDYSPMI. 12 consecutive transmembrane segments (helical) span residues 52-72, 94-114, 128-148, 151-171, 182-202, 211-231, 293-313, 329-349, 356-376, 392-412, 424-444, and 450-470; these read LPHVLVATISSFLFGYHLGVV, LVVSVCLGGAFLGSLFSGGVA, LPMILGAFVSGVSNSLAVMLL, FLVGTGMGLGPPVAALYVTEV, SFIQIATCLGLMAALFIGIPV, VCFWLSTIPAALLALGMFLCA, VVFIGSTLFALQQLSGINAVF, LGNIFVGVSNLLGSVIAMVLM, LLLLWSFIGMAAAMALQVGAT, GTLVFVLTFALGAGPVPGLLL, AMAFCMSVHWVINFFVGLLFL, and LGPRLLYSMFSTFCLMAVMFV.

The protein belongs to the major facilitator superfamily. Sugar transporter (TC 2.A.1.1) family.

The protein resides in the plastid. It localises to the chloroplast membrane. In terms of biological role, may be involved in the efflux of glucose towards the cytosol. The protein is Probable plastidic glucose transporter 2 of Arabidopsis thaliana (Mouse-ear cress).